The primary structure comprises 424 residues: 3-phosphoshikimate 1-carboxyvinyltransferase (424 aa).

Residues lysine 20, serine 21, and arginine 25 each coordinate 3-phosphoshikimate. Lysine 20 is a binding site for phosphoenolpyruvate. Residues glycine 92 and arginine 120 each coordinate phosphoenolpyruvate. 4 residues coordinate 3-phosphoshikimate: serine 165, glutamine 167, aspartate 313, and lysine 340. Glutamine 167 contacts phosphoenolpyruvate. Aspartate 313 serves as the catalytic Proton acceptor. Phosphoenolpyruvate is bound by residues arginine 344 and arginine 386.

Belongs to the EPSP synthase family. Monomer.

The protein localises to the cytoplasm. The enzyme catalyses 3-phosphoshikimate + phosphoenolpyruvate = 5-O-(1-carboxyvinyl)-3-phosphoshikimate + phosphate. It participates in metabolic intermediate biosynthesis; chorismate biosynthesis; chorismate from D-erythrose 4-phosphate and phosphoenolpyruvate: step 6/7. Functionally, catalyzes the transfer of the enolpyruvyl moiety of phosphoenolpyruvate (PEP) to the 5-hydroxyl of shikimate-3-phosphate (S3P) to produce enolpyruvyl shikimate-3-phosphate and inorganic phosphate. This chain is 3-phosphoshikimate 1-carboxyvinyltransferase, found in Bacillus cytotoxicus (strain DSM 22905 / CIP 110041 / 391-98 / NVH 391-98).